We begin with the raw amino-acid sequence, 611 residues long: Alpha-1,2-mannosyltransferase ALG9 (611 aa).

Residues 1–10 show a composition bias toward basic residues; sequence MASRGARQRL. The tract at residues 1–23 is disordered; sequence MASRGARQRLKGSGASSGDTAPA. Topologically, residues 1-135 are lumenal; that stretch reads MASRGARQRL…FHARILQTNK (135 aa). N-linked (GlcNAc...) asparagine glycosylation is present at asparagine 77. A helical membrane pass occupies residues 136-156; it reads ILVFYFLRCLLAFVSCICELY. The Cytoplasmic segment spans residues 157–171; that stretch reads FYKAVCKKFGLHVSR. Residues 172–192 traverse the membrane as a helical segment; it reads MMLAFLVLSTGMFCSSSAFLP. The Lumenal portion of the chain corresponds to 193-213; sequence SSFCMYTTLIAMTGWYMDKTS. A helical membrane pass occupies residues 214–234; the sequence is IAVLGVAAGAILGWPFSAALG. At 235–249 the chain is on the cytoplasmic side; sequence LPIAFDLLVMKHRWK. The helical transmembrane segment at 250–270 threads the bilayer; the sequence is SFFHWSLMALILFLVPVVVID. At 271-304 the chain is on the lumenal side; sequence SYYYGKLVIAPLNIVLYNVFTPHGPDLYGTEPWY. A helical membrane pass occupies residues 305–325; sequence FYLINGFLNFNVAFALALLVL. Topologically, residues 326–342 are cytoplasmic; that stretch reads PLTSLMEYLLQRFHVQN. A helical transmembrane segment spans residues 343–363; it reads LGHPYWLTLAPMYIWFIIFFI. At 364 to 370 the chain is on the lumenal side; that stretch reads QPHKEER. A helical membrane pass occupies residues 371–391; that stretch reads FLFPVYPLICLCGAVALSALQ. Residues 392–405 lie on the Cytoplasmic side of the membrane; the sequence is KCYHFVFQRYRLEH. A helical transmembrane segment spans residues 406–426; it reads YTVTSNWLALGTVFLFGLLSF. Residues 427–611 lie on the Lumenal side of the membrane; the sequence is SRSVALFRGY…AKQIRKKSGG (185 aa). Residue asparagine 593 is glycosylated (N-linked (GlcNAc...) asparagine).

It belongs to the glycosyltransferase 22 family. In terms of tissue distribution, ubiquitously expressed; with highest levels in heart, liver and pancreas.

Its subcellular location is the endoplasmic reticulum membrane. The catalysed reaction is an alpha-D-Man-(1-&gt;2)-alpha-D-Man-(1-&gt;2)-alpha-D-Man-(1-&gt;3)-[alpha-D-Man-(1-&gt;3)-alpha-D-Man-(1-&gt;6)]-beta-D-Man-(1-&gt;4)-beta-D-GlcNAc-(1-&gt;4)-alpha-D-GlcNAc-diphospho-di-trans,poly-cis-dolichol + a di-trans,poly-cis-dolichyl beta-D-mannosyl phosphate = an alpha-D-Man-(1-&gt;2)-alpha-D-Man-(1-&gt;2)-alpha-D-Man-(1-&gt;3)-[alpha-D-Man-(1-&gt;2)-alpha-D-Man-(1-&gt;3)-alpha-D-Man-(1-&gt;6)]-beta-D-Man-(1-&gt;4)-beta-D-GlcNAc-(1-&gt;4)-alpha-D-GlcNAc-diphospho-di-trans,poly-cis-dolichol + a di-trans,poly-cis-dolichyl phosphate + H(+). It catalyses the reaction an alpha-D-Man-(1-&gt;2)-alpha-D-Man-(1-&gt;2)-alpha-D-Man-(1-&gt;3)-[alpha-D-Man-(1-&gt;2)-alpha-D-Man-(1-&gt;3)-[alpha-D-Man-(1-&gt;6)]-alpha-D-Man-(1-&gt;6)]-beta-D-Man-(1-&gt;4)-beta-D-GlcNAc-(1-&gt;4)-alpha-D-GlcNAc-diphospho-di-trans,poly-cis-dolichol + a di-trans,poly-cis-dolichyl beta-D-mannosyl phosphate = an alpha-D-Man-(1-&gt;2)-alpha-D-Man-(1-&gt;2)-alpha-D-Man-(1-&gt;3)-[alpha-D-Man-(1-&gt;2)-alpha-D-Man-(1-&gt;3)-[alpha-D-Man-(1-&gt;2)-alpha-D-Man-(1-&gt;6)]-alpha-D-Man-(1-&gt;6)]-beta-D-Man-(1-&gt;4)-beta-D-GlcNAc-(1-&gt;4)-alpha-D-GlcNAc-diphospho-di-trans,poly-cis-dolichol + a di-trans,poly-cis-dolichyl phosphate + H(+). It functions in the pathway protein modification; protein glycosylation. Functionally, mannosyltransferase that operates in the biosynthetic pathway of dolichol-linked oligosaccharides, the glycan precursors employed in protein asparagine (N)-glycosylation. The assembly of dolichol-linked oligosaccharides begins on the cytosolic side of the endoplasmic reticulum membrane and finishes in its lumen. The sequential addition of sugars to dolichol pyrophosphate produces dolichol-linked oligosaccharides containing fourteen sugars, including two GlcNAcs, nine mannoses and three glucoses. Once assembled, the oligosaccharide is transferred from the lipid to nascent proteins by oligosaccharyltransferases. In the lumen of the endoplasmic reticulum, catalyzes the addition of the seventh and ninth alpha-1,2-linked mannose residues to Man(6)GlcNAc(2)-PP-dolichol and Man(8)GlcNAc(2)-PP-dolichol respectively. This Homo sapiens (Human) protein is Alpha-1,2-mannosyltransferase ALG9.